A 523-amino-acid chain; its full sequence is Translation initiation factor eIF2B subunit delta (523 aa).

The disordered stretch occupies residues 1–154; sequence MAAVAVAVRE…EHTQADDPTL (154 aa). Residue alanine 2 is modified to N-acetylalanine. Phosphoserine is present on serine 12. The segment covering 31–40 has biased composition (basic and acidic residues); it reads MTQEEKLQLR. Residues 41–51 are compositionally biased toward basic residues; that stretch reads KEKKQQKKKRK. At threonine 85 the chain carries Phosphothreonine. The span at 95–120 shows a compositional bias: basic and acidic residues; that stretch reads TKAELRAERRAKQEAERALKQARKGE. Serine 129 is modified (phosphoserine). A may bind the chemical integrated stress response (ISR) inhibitor ISRIB region spans residues 170–179; that stretch reads RKDYGSKVSL.

It belongs to the eIF-2B alpha/beta/delta subunits family. Component of the translation initiation factor 2B (eIF2B) complex which is a heterodecamer of two sets of five different subunits: alpha, beta, gamma, delta and epsilon. Subunits alpha, beta and delta comprise a regulatory subcomplex and subunits epsilon and gamma comprise a catalytic subcomplex. Within the complex, the hexameric regulatory complex resides at the center, with the two heterodimeric catalytic subcomplexes bound on opposite sides.

It is found in the cytoplasm. It localises to the cytosol. With respect to regulation, activated by the chemical integrated stress response (ISR) inhibitor ISRIB which stimulates guanine nucleotide exchange factor activity for both phosphorylated and unphosphorylated eIF2. Acts as a component of the translation initiation factor 2B (eIF2B) complex, which catalyzes the exchange of GDP for GTP on eukaryotic initiation factor 2 (eIF2) gamma subunit. Its guanine nucleotide exchange factor activity is repressed when bound to eIF2 complex phosphorylated on the alpha subunit, thereby limiting the amount of methionyl-initiator methionine tRNA available to the ribosome and consequently global translation is repressed. This chain is Translation initiation factor eIF2B subunit delta (EIF2B4), found in Oryctolagus cuniculus (Rabbit).